We begin with the raw amino-acid sequence, 260 residues long: Aliphatic sulfonates import ATP-binding protein SsuB 1 (260 aa).

The ABC transporter domain occupies 29 to 243 (VRVDGLTRSF…DITDPRFAEL (215 aa)). Residue 61–68 (GRSGCGKS) coordinates ATP.

It belongs to the ABC transporter superfamily. Aliphatic sulfonates importer (TC 3.A.1.17.2) family. The complex is composed of two ATP-binding proteins (SsuB), two transmembrane proteins (SsuC) and a solute-binding protein (SsuA).

The protein localises to the cell membrane. It catalyses the reaction ATP + H2O + aliphatic sulfonate-[sulfonate-binding protein]Side 1 = ADP + phosphate + aliphatic sulfonateSide 2 + [sulfonate-binding protein]Side 1.. Part of the ABC transporter complex SsuABC involved in aliphatic sulfonates import. Responsible for energy coupling to the transport system. The polypeptide is Aliphatic sulfonates import ATP-binding protein SsuB 1 (Streptomyces avermitilis (strain ATCC 31267 / DSM 46492 / JCM 5070 / NBRC 14893 / NCIMB 12804 / NRRL 8165 / MA-4680)).